The primary structure comprises 121 residues: Large ribosomal subunit protein bL12 (121 aa).

It belongs to the bacterial ribosomal protein bL12 family. As to quaternary structure, homodimer. Part of the ribosomal stalk of the 50S ribosomal subunit. Forms a multimeric L10(L12)X complex, where L10 forms an elongated spine to which 2 to 4 L12 dimers bind in a sequential fashion. Binds GTP-bound translation factors.

In terms of biological role, forms part of the ribosomal stalk which helps the ribosome interact with GTP-bound translation factors. Is thus essential for accurate translation. This is Large ribosomal subunit protein bL12 from Oenococcus oeni (strain ATCC BAA-331 / PSU-1).